Here is a 307-residue protein sequence, read N- to C-terminus: Glutathione synthetase (307 aa).

Residues 120–304 (KLGALRFSRW…LADQTIERLR (185 aa)) form the ATP-grasp domain. 146–202 (AREQGDVVLKPLGGRAGLGVIRVQAEAPGLKALLELVTEQERLPVMAQRFLPDVTEG) serves as a coordination point for ATP. Glu275 and Asn277 together coordinate Mg(2+).

Belongs to the prokaryotic GSH synthase family. Mg(2+) serves as cofactor. It depends on Mn(2+) as a cofactor.

It catalyses the reaction gamma-L-glutamyl-L-cysteine + glycine + ATP = glutathione + ADP + phosphate + H(+). It participates in sulfur metabolism; glutathione biosynthesis; glutathione from L-cysteine and L-glutamate: step 2/2. The protein is Glutathione synthetase of Parasynechococcus marenigrum (strain WH8102).